Consider the following 273-residue polypeptide: CUE domain-containing protein 2-A (273 aa).

Positions 92–121 are disordered; sequence GKENVSPKPTAEVSFMTPTSSSTESSKKIE. The region spanning 135–178 is the CUE domain; it reads DAKNGIDLLLEIFPSCTVSQAQTALSMAKGDLEDAVQIIVDGKV.

This sequence belongs to the CUEDC2 family. In terms of processing, phosphorylated.

Its subcellular location is the cytoplasm. The protein localises to the nucleus. May play a role in targeting proteins for ubiquitination and subsequent proteasomal degradation. The protein is CUE domain-containing protein 2-A (cuedc2-a) of Xenopus laevis (African clawed frog).